The primary structure comprises 102 residues: Large ribosomal subunit protein bL21 (102 aa).

This sequence belongs to the bacterial ribosomal protein bL21 family. In terms of assembly, part of the 50S ribosomal subunit. Contacts protein L20.

Functionally, this protein binds to 23S rRNA in the presence of protein L20. This is Large ribosomal subunit protein bL21 from Campylobacter lari (strain RM2100 / D67 / ATCC BAA-1060).